A 138-amino-acid polypeptide reads, in one-letter code: Flagellar assembly factor FliW (138 aa).

This sequence belongs to the FliW family. In terms of assembly, interacts with translational regulator CsrA and flagellin(s).

It is found in the cytoplasm. In terms of biological role, acts as an anti-CsrA protein, binds CsrA and prevents it from repressing translation of its target genes, one of which is flagellin. Binds to flagellin and participates in the assembly of the flagellum. The polypeptide is Flagellar assembly factor FliW (Symbiobacterium thermophilum (strain DSM 24528 / JCM 14929 / IAM 14863 / T)).